Here is a 292-residue protein sequence, read N- to C-terminus: 1D-myo-inositol 2-acetamido-2-deoxy-alpha-D-glucopyranoside deacetylase (292 aa).

Residues histidine 12, aspartate 15, and histidine 147 each coordinate Zn(2+).

Belongs to the MshB deacetylase family. It depends on Zn(2+) as a cofactor.

It catalyses the reaction 1D-myo-inositol 2-acetamido-2-deoxy-alpha-D-glucopyranoside + H2O = 1D-myo-inositol 2-amino-2-deoxy-alpha-D-glucopyranoside + acetate. In terms of biological role, catalyzes the deacetylation of 1D-myo-inositol 2-acetamido-2-deoxy-alpha-D-glucopyranoside (GlcNAc-Ins) in the mycothiol biosynthesis pathway. In Rhodococcus jostii (strain RHA1), this protein is 1D-myo-inositol 2-acetamido-2-deoxy-alpha-D-glucopyranoside deacetylase.